A 341-amino-acid chain; its full sequence is Methionine import ATP-binding protein MetN 3 (341 aa).

Residues 2-241 (ILLENVKKIY…PKQDITKRFV (240 aa)) form the ABC transporter domain. 38 to 45 (GYSGAGKS) provides a ligand contact to ATP.

This sequence belongs to the ABC transporter superfamily. Methionine importer (TC 3.A.1.24) family. As to quaternary structure, the complex is composed of two ATP-binding proteins (MetN), two transmembrane proteins (MetI) and a solute-binding protein (MetQ).

It is found in the cell membrane. It catalyses the reaction L-methionine(out) + ATP + H2O = L-methionine(in) + ADP + phosphate + H(+). The enzyme catalyses D-methionine(out) + ATP + H2O = D-methionine(in) + ADP + phosphate + H(+). Functionally, part of the ABC transporter complex MetNIQ involved in methionine import. Responsible for energy coupling to the transport system. The polypeptide is Methionine import ATP-binding protein MetN 3 (Bacillus cereus (strain ATCC 14579 / DSM 31 / CCUG 7414 / JCM 2152 / NBRC 15305 / NCIMB 9373 / NCTC 2599 / NRRL B-3711)).